A 445-amino-acid chain; its full sequence is tRNA(Ile)-lysidine synthase (445 aa).

19–24 (SGGIDS) provides a ligand contact to ATP.

The protein belongs to the tRNA(Ile)-lysidine synthase family.

The protein resides in the cytoplasm. It catalyses the reaction cytidine(34) in tRNA(Ile2) + L-lysine + ATP = lysidine(34) in tRNA(Ile2) + AMP + diphosphate + H(+). Its function is as follows. Ligates lysine onto the cytidine present at position 34 of the AUA codon-specific tRNA(Ile) that contains the anticodon CAU, in an ATP-dependent manner. Cytidine is converted to lysidine, thus changing the amino acid specificity of the tRNA from methionine to isoleucine. This is tRNA(Ile)-lysidine synthase from Buchnera aphidicola subsp. Schizaphis graminum (strain Sg).